The following is an 87-amino-acid chain: Selenoprotein W (87 aa).

The cysteinyl-selenocysteine (Cys-Sec); redox-active cross-link spans 10–13; the sequence is CGAU. Sec13 is a non-standard amino acid (selenocysteine). At Cys37 the chain carries S-glutathionyl cysteine.

The protein belongs to the SelWTH family. Selenoprotein W subfamily. In terms of assembly, interacts with DPYSL2, PRDX1, YWHAB, YWHAG, HSP70 and HSP90. In terms of tissue distribution, detected in muscle, heart, tongue, brain, lung, spleen, kidney and liver. Highest levels expressed in muscle and heart whereas lowest levels detected in liver (at protein level).

Its subcellular location is the cytoplasm. Functionally, plays a role as a glutathione (GSH)-dependent antioxidant. May be involved in a redox-related process. May play a role in the myopathies of selenium deficiency. The chain is Selenoprotein W from Ovis aries (Sheep).